The chain runs to 251 residues: Hydroxyacylglutathione hydrolase (251 aa).

Zn(2+)-binding residues include His53, His55, Asp57, His58, His110, Asp127, and His165.

It belongs to the metallo-beta-lactamase superfamily. Glyoxalase II family. Monomer. The cofactor is Zn(2+).

It catalyses the reaction an S-(2-hydroxyacyl)glutathione + H2O = a 2-hydroxy carboxylate + glutathione + H(+). It functions in the pathway secondary metabolite metabolism; methylglyoxal degradation; (R)-lactate from methylglyoxal: step 2/2. Its function is as follows. Thiolesterase that catalyzes the hydrolysis of S-D-lactoyl-glutathione to form glutathione and D-lactic acid. This is Hydroxyacylglutathione hydrolase from Pectobacterium carotovorum subsp. carotovorum (strain PC1).